A 640-amino-acid chain; its full sequence is Kelch-like protein 17 (640 aa).

The interval 1–50 is disordered; sequence MQPRGERPAGRTQSPEHSSPGPGPEAPPPPQPPAPEAERARPRQARPAAP. Over residues 21–35 the composition is skewed to pro residues; sequence GPGPEAPPPPQPPAP. One can recognise a BTB domain in the interval 90-157; it reads CDIVLHVAAK…AYTAEIVVGE (68 aa). One can recognise a BACK domain in the interval 192–294; it reads CLGIRGFADT…SRDFLLGHVD (103 aa). The interval 287-639 is interaction with F-actin; sequence DFLLGHVDAE…SPTLSVSSTS (353 aa). Kelch repeat units lie at residues 341–387, 388–434, 436–481, 482–528, 530–575, and 576–622; these read VLFA…AVGN, RLYA…ALHG, LYAA…TLDG, NLYA…VLEG, LYVA…AMDG, and WLYA…VLEL. Residues 638–640 are interaction with PDZK1; it reads TSL.

Interacts with F-actin; the interaction disrupts the F-actin structures and leads to marked changes of neuronal morphology. Component of a complex, composed of PDZK1, SYNGAP1, KLHL17 and NMDA receptors. Interacts directly with PDZK1 (via PDZ1 domain); the interaction is important for integrity of actin cytoskeleton structures in neurons. Interacts with DLG4 and SYNGAP1. Interacts (via kelch repeats) with GRIK2 (via C-terminus); the interaction targets GRIK2 for degradation via ubiquitin-proteasome pathway. Interacts with GRIK1. Interacts with (via BTB domain) CUL3; the interaction regulates surface GRIK2 expression.

It localises to the postsynaptic density. The protein resides in the synapse. The protein operates within protein modification; protein ubiquitination. Functionally, substrate-recognition component of some cullin-RING-based BCR (BTB-CUL3-RBX1) E3 ubiquitin-protein ligase complexes. The BCR(KLHL17) complex mediates the ubiquitination and subsequent degradation of GLUR6. May play a role in the actin-based neuronal function. The sequence is that of Kelch-like protein 17 (Klhl17) from Mus musculus (Mouse).